Reading from the N-terminus, the 265-residue chain is Apolipoprotein A-I (265 aa).

Residues 1-18 (MKAVVLTLAVLFLTGSQA) form the signal peptide. Tandem repeats lie at residues 67-88 (LKLLDNWDSLGSTFTKVREQLG) and 89-110 (PVTQEFWDNLEKETEALRQEMS). The 10 X approximate tandem repeats stretch occupies residues 67–265 (LKLLDNWDSL…DEASKKLNAQ (199 aa)). Met109 carries the methionine sulfoxide modification. A 3; half-length repeat occupies 111–121 (KDLEEVKKKVQ). 5 consecutive repeat copies span residues 122–142 (PYLDDFQNKWQEEMETYRQKM), 144–165 (PLGAEFREGARQKVQELQEKLS), 166–187 (PLAEELRDRLRAHVEALRQHVA), 188–209 (PYSDDLRQRMAARFEALKEGGG), and 210–230 (SLAEYQAKAQEQLKALGEKAK). Residue Met135 is modified to Methionine sulfoxide. Residues 231-241 (PALEDLRQGLL) form a 9; half-length repeat. Repeat unit 10 spans residues 242-265 (PVLENLKVSILAAIDEASKKLNAQ).

This sequence belongs to the apolipoprotein A1/A4/E family. As to quaternary structure, homodimer. Interacts with APOA1BP and CLU. Component of a sperm activating protein complex (SPAP), consisting of APOA1, an immunoglobulin heavy chain, an immunoglobulin light chain and albumin. Interacts with NDRG1. Interacts with SCGB3A2. Interacts with NAXE and YJEFN3. Glycosylated. In terms of processing, palmitoylated. Post-translationally, phosphorylation sites are present in the extracellular medium. Major protein of plasma HDL, also found in chylomicrons. Synthesized predominantly in the intestine and the liver.

The protein localises to the secreted. Its function is as follows. Participates in the reverse transport of cholesterol from tissues to the liver for excretion by promoting cholesterol efflux from tissues and by acting as a cofactor for the lecithin cholesterol acyltransferase (LCAT). As part of the SPAP complex, activates spermatozoa motility. In Sus scrofa (Pig), this protein is Apolipoprotein A-I (APOA1).